The primary structure comprises 483 residues: ATP-dependent protease ATPase subunit HslU (483 aa).

ATP-binding positions include valine 18 and 60-65; that span reads GVGKTE. Low complexity-rich tracts occupy residues 136–147 and 171–181; these read LPGGAPQPAPAQ and AQADASQASPP. The segment at 136–212 is disordered; it reads LPGGAPQPAP…HGGKLDDREV (77 aa). Residues 182–191 show a composition bias toward polar residues; sequence TGTGSAPDSR. The span at 192–209 shows a compositional bias: basic and acidic residues; sequence SSTREKLRTLWHGGKLDD. Positions 296, 361, and 433 each coordinate ATP.

It belongs to the ClpX chaperone family. HslU subfamily. In terms of assembly, a double ring-shaped homohexamer of HslV is capped on each side by a ring-shaped HslU homohexamer. The assembly of the HslU/HslV complex is dependent on binding of ATP.

Its subcellular location is the cytoplasm. Its function is as follows. ATPase subunit of a proteasome-like degradation complex; this subunit has chaperone activity. The binding of ATP and its subsequent hydrolysis by HslU are essential for unfolding of protein substrates subsequently hydrolyzed by HslV. HslU recognizes the N-terminal part of its protein substrates and unfolds these before they are guided to HslV for hydrolysis. The protein is ATP-dependent protease ATPase subunit HslU of Nitratidesulfovibrio vulgaris (strain DSM 19637 / Miyazaki F) (Desulfovibrio vulgaris).